Reading from the N-terminus, the 278-residue chain is Phosphatidylglycerol--prolipoprotein diacylglyceryl transferase (278 aa).

4 helical membrane-spanning segments follow: residues 19 to 39 (WYGI…INEG), 49 to 69 (FIDF…IYYV), 86 to 106 (IWNG…VLLI), and 112 to 132 (MLPP…AQVI). Arg-134 lines the a 1,2-diacyl-sn-glycero-3-phospho-(1'-sn-glycerol) pocket. The next 3 helical transmembrane spans lie at 174 to 194 (QPTY…ILSL), 204 to 224 (GEIF…VEGM), and 235 to 255 (IRVS…LWIY).

It belongs to the Lgt family.

It is found in the cell membrane. The catalysed reaction is L-cysteinyl-[prolipoprotein] + a 1,2-diacyl-sn-glycero-3-phospho-(1'-sn-glycerol) = an S-1,2-diacyl-sn-glyceryl-L-cysteinyl-[prolipoprotein] + sn-glycerol 1-phosphate + H(+). The protein operates within protein modification; lipoprotein biosynthesis (diacylglyceryl transfer). Catalyzes the transfer of the diacylglyceryl group from phosphatidylglycerol to the sulfhydryl group of the N-terminal cysteine of a prolipoprotein, the first step in the formation of mature lipoproteins. In Lactobacillus johnsonii (strain CNCM I-12250 / La1 / NCC 533), this protein is Phosphatidylglycerol--prolipoprotein diacylglyceryl transferase.